The chain runs to 348 residues: Alcohol dehydrogenase 1 (348 aa).

Zn(2+) is bound by residues Cys44, His67, Cys98, Cys101, Cys104, Cys112, and Cys154. Residues 178 to 184 (GAGGGLG), Asp202, Lys207, 269 to 271 (VGL), and Arg341 each bind NAD(+).

The protein belongs to the zinc-containing alcohol dehydrogenase family. Homotetramer. Requires Zn(2+) as cofactor.

The protein localises to the cytoplasm. The enzyme catalyses a primary alcohol + NAD(+) = an aldehyde + NADH + H(+). It catalyses the reaction a secondary alcohol + NAD(+) = a ketone + NADH + H(+). Functionally, converts ethanol to acetaldehyde and plays a major role in xylose fermentation. The sequence is that of Alcohol dehydrogenase 1 (ADH1) from Scheffersomyces stipitis (strain ATCC 58785 / CBS 6054 / NBRC 10063 / NRRL Y-11545) (Yeast).